The chain runs to 349 residues: Glycerol-3-phosphate dehydrogenase [NAD(+)], cytoplasmic (349 aa).

NAD(+) is bound by residues 10–15 (GSGNWG), F41, and F97. K120 contributes to the substrate binding site. A153 serves as a coordination point for NAD(+). A Phosphoserine modification is found at S154. The Proton acceptor role is filled by K204. R269 contributes to the NAD(+) binding site. Residue 269 to 270 (RN) participates in substrate binding. K289 bears the N6-succinyllysine mark. Residues K296 and Q298 each coordinate NAD(+). Position 326 is a phosphotyrosine (Y326).

The protein belongs to the NAD-dependent glycerol-3-phosphate dehydrogenase family. In terms of assembly, homodimer. In terms of tissue distribution, expressed in liver (at protein level).

The protein localises to the cytoplasm. The catalysed reaction is sn-glycerol 3-phosphate + NAD(+) = dihydroxyacetone phosphate + NADH + H(+). Inhibited by zinc ions and sulfate. Functionally, has glycerol-3-phosphate dehydrogenase activity. This chain is Glycerol-3-phosphate dehydrogenase [NAD(+)], cytoplasmic, found in Homo sapiens (Human).